The chain runs to 787 residues: DNA ligase (787 aa).

Residues 32-36, 81-82, and glutamate 121 each bind NAD(+); these read DVEYD and SL. Lysine 123 serves as the catalytic N6-AMP-lysine intermediate. Positions 144, 181, 297, and 321 each coordinate NAD(+). Zn(2+) is bound by residues cysteine 415, cysteine 418, cysteine 445, and cysteine 451. In terms of domain architecture, BRCT spans 703 to 787; the sequence is VEGLPLAGQT…RLIELGVAVD (85 aa).

Belongs to the NAD-dependent DNA ligase family. LigA subfamily. Requires Mg(2+) as cofactor. The cofactor is Mn(2+).

It catalyses the reaction NAD(+) + (deoxyribonucleotide)n-3'-hydroxyl + 5'-phospho-(deoxyribonucleotide)m = (deoxyribonucleotide)n+m + AMP + beta-nicotinamide D-nucleotide.. Its function is as follows. DNA ligase that catalyzes the formation of phosphodiester linkages between 5'-phosphoryl and 3'-hydroxyl groups in double-stranded DNA using NAD as a coenzyme and as the energy source for the reaction. It is essential for DNA replication and repair of damaged DNA. This Pseudomonas syringae pv. syringae (strain B728a) protein is DNA ligase.